A 354-amino-acid polypeptide reads, in one-letter code: Mycothiol acetyltransferase (354 aa).

Polar residues predominate over residues 1-18; that stretch reads MMVDNQTPDSSTLSTAST. The disordered stretch occupies residues 1–21; the sequence is MMVDNQTPDSSTLSTASTPVY. N-acetyltransferase domains follow at residues 21-176 and 191-354; these read YAEP…QTRE and LRMR…EPAA. Glu-52 contributes to the 1D-myo-inositol 2-(L-cysteinylamino)-2-deoxy-alpha-D-glucopyranoside binding site. An acetyl-CoA-binding site is contributed by 101–103; the sequence is AAV. 1D-myo-inositol 2-(L-cysteinylamino)-2-deoxy-alpha-D-glucopyranoside contacts are provided by Glu-217, Lys-259, and Glu-274. Residues 278 to 280 and 285 to 291 contribute to the acetyl-CoA site; these read VGV and QGGGLGR. 1D-myo-inositol 2-(L-cysteinylamino)-2-deoxy-alpha-D-glucopyranoside is bound at residue Tyr-318.

The protein belongs to the acetyltransferase family. MshD subfamily. As to quaternary structure, monomer.

It catalyses the reaction 1D-myo-inositol 2-(L-cysteinylamino)-2-deoxy-alpha-D-glucopyranoside + acetyl-CoA = mycothiol + CoA + H(+). Its function is as follows. Catalyzes the transfer of acetyl from acetyl-CoA to desacetylmycothiol (Cys-GlcN-Ins) to form mycothiol. The polypeptide is Mycothiol acetyltransferase (Rothia mucilaginosa (strain DY-18) (Stomatococcus mucilaginosus)).